The following is a 211-amino-acid chain: Arginine exporter protein ArgO (211 aa).

The next 6 membrane-spanning stretches (helical) occupy residues 1–21 (MISY…PLGP), 37–57 (LMIA…GIFG), 68–88 (LLAL…FGAL), 111–131 (IIAT…DTFV), 147–167 (WFAL…ALLA), and 179–199 (AQRI…FQLA).

The protein belongs to the LysE/ArgO transporter (TC 2.A.75) family.

It localises to the cell inner membrane. It catalyses the reaction L-arginine(in) = L-arginine(out). Functionally, involved in the export of arginine. Important to control the intracellular level of arginine and the correct balance between arginine and lysine. This chain is Arginine exporter protein ArgO, found in Salmonella paratyphi C (strain RKS4594).